Consider the following 509-residue polypeptide: DAP3-binding cell death enhancer 1 (509 aa).

The transit peptide at 1 to 23 (MWRLTGILGRALPRLLGPGFRGI) directs the protein to the mitochondrion. Disordered regions lie at residues 19 to 60 (GFRG…RNRD) and 143 to 185 (VLPS…PGLL). Residues 24 to 101 (TPKPTSSDGP…AVLALHLARQ (78 aa)) constitute a propeptide, extended MTS. Residues 26 to 40 (KPTSSDGPQTTSTTL) are compositionally biased toward polar residues. 2 stretches are compositionally biased toward basic and acidic residues: residues 46 to 60 (NFDR…RNRD) and 156 to 168 (GLRE…EEPA). TPR repeat units follow at residues 213–245 (AGPP…QLSV), 246–278 (AIAF…RGYS), 279–313 (KAQY…VQGH), 314–351 (SLAQ…DSGL), 352–385 (TEAQ…SNGD), 386–423 (SQSR…GNEP), and 470–498 (ASST…AMPS). An SIFI-degron motif is present at residues 307-326 (LAAVQGHSLAQYRYARCLLQ).

This sequence belongs to the DELE1 family. Interacts with DAP3. As to quaternary structure, interacts (via TPR repeats) with EIF2AK1/HRI; activating the protein kinase activity of EIF2AK1/HRI, thereby promoting the integrated stress response (ISR). In terms of assembly, homooctamer; oligomerization is required to activate EIF2AK1/HRI. Interacts (via TPR repeats) with EIF2AK1/HRI; activating the protein kinase activity of EIF2AK1/HRI, thereby promoting the integrated stress response (ISR). In terms of processing, unstable protein in absence of stress: imported in the mitochondrial matrix following processing by the mitochondrial-processing peptidase (MPP), where it is degraded by LONP1. Stabilized in response to iron deficiency: iron deficiency impairs mitochondrial import, promoting localization at the mitochondrial surface and stabilization. Cleaved by OMA1 in response to mitochondrial stress, generating the DAP3-binding cell death enhancer 1 short form (DELE1(S) or S-DELE1) that accumulates in the cytosol and activates the protein kinase activity of EIF2AK1/HRI. Protein cleavage by OMA1 can take place at different positions, and apparently does not require a specific sequence motif. Post-translationally, ubiquitinated and degraded by the SIFI complex once the mitochondrial stress has been resolved, thereby providing stress response silencing. Within the SIFI complex, UBR4 initiates ubiquitin chain that are further elongated or branched by KCMF1.

It is found in the mitochondrion. Its subcellular location is the mitochondrion outer membrane. It localises to the mitochondrion inner membrane. The protein localises to the cytoplasm. The protein resides in the cytosol. Functionally, protein kinase activator that acts as a key activator of the integrated stress response (ISR) following various stresses, such as iron deficiency, mitochondrial stress or mitochondrial DNA breaks. Detects impaired protein import and processing in mitochondria, activating the ISR. May also required for the induction of death receptor-mediated apoptosis through the regulation of caspase activation. Its function is as follows. Protein kinase activator that activates the ISR in response to iron deficiency: iron deficiency impairs mitochondrial import, promoting DELE1 localization at the mitochondrial surface, where it binds and activates EIF2AK1/HRI to trigger the ISR. Protein kinase activator generated by protein cleavage in response to mitochondrial stress, which accumulates in the cytosol and specifically binds to and activates the protein kinase activity of EIF2AK1/HRI. It thereby activates the integrated stress response (ISR): EIF2AK1/HRI activation promotes eIF-2-alpha (EIF2S1) phosphorylation, leading to a decrease in global protein synthesis and the induction of selected genes, including the transcription factor ATF4, the master transcriptional regulator of the ISR. Also acts as an activator of PRKN-independent mitophagy: activates the protein kinase activity of EIF2AK1/HRI in response to mitochondrial damage, promoting eIF-2-alpha (EIF2S1) phosphorylation, leading to mitochondrial localization of EIF2S1 followed by induction of mitophagy. The sequence is that of DAP3-binding cell death enhancer 1 from Rattus norvegicus (Rat).